The sequence spans 417 residues: Serine protease hepsin (417 aa).

The Cytoplasmic portion of the chain corresponds to methionine 1–alanine 23. The helical; Signal-anchor for type II membrane protein transmembrane segment at glycine 24 to leucine 44 threads the bilayer. Over arginine 45–leucine 417 the chain is Extracellular. Positions valine 54 to glutamine 151 constitute an SRCR domain. Disulfide bonds link cysteine 77-cysteine 140, cysteine 90-cysteine 150, cysteine 119-cysteine 138, cysteine 153-cysteine 277, cysteine 188-cysteine 204, cysteine 291-cysteine 359, cysteine 322-cysteine 338, and cysteine 349-cysteine 381. N-linked (GlcNAc...) asparagine glycosylation occurs at asparagine 112. The 243-residue stretch at isoleucine 163–lysine 405 folds into the Peptidase S1 domain. Catalysis depends on charge relay system residues histidine 203 and aspartate 257. The active-site Charge relay system is serine 353.

Belongs to the peptidase S1 family. In terms of tissue distribution, detected in liver and kidney.

Its subcellular location is the cell membrane. It is found in the apical cell membrane. It carries out the reaction Cleavage after basic amino-acid residues, with Arg strongly preferred to Lys.. Its function is as follows. Serine protease that cleaves extracellular substrates, and contributes to the proteolytic processing of growth factors, such as HGF and MST1/HGFL. Plays a role in cell growth and maintenance of cell morphology. Plays a role in the proteolytic processing of ACE2. Mediates the proteolytic cleavage of urinary UMOD that is required for UMOD polymerization. This Homo sapiens (Human) protein is Serine protease hepsin (HPN).